The sequence spans 136 residues: Large ribosomal subunit protein uL16 (136 aa).

The protein belongs to the universal ribosomal protein uL16 family. As to quaternary structure, part of the 50S ribosomal subunit.

In terms of biological role, binds 23S rRNA and is also seen to make contacts with the A and possibly P site tRNAs. The polypeptide is Large ribosomal subunit protein uL16 (Elusimicrobium minutum (strain Pei191)).